The sequence spans 117 residues: Large ribosomal subunit protein uL24 (117 aa).

Residues 1–10 (MSKQPRKQRK) are compositionally biased toward basic residues. The tract at residues 1–28 (MSKQPRKQRKALYTAPLHKRHNSMSVHL) is disordered.

This sequence belongs to the universal ribosomal protein uL24 family. Part of the 50S ribosomal subunit.

Its function is as follows. One of two assembly initiator proteins, it binds directly to the 5'-end of the 23S rRNA, where it nucleates assembly of the 50S subunit. Located at the polypeptide exit tunnel on the outside of the subunit. The protein is Large ribosomal subunit protein uL24 of Methanosphaera stadtmanae (strain ATCC 43021 / DSM 3091 / JCM 11832 / MCB-3).